Here is a 2475-residue protein sequence, read N- to C-terminus: Non-reducing polyketide synthase prhL (2475 aa).

Positions 14 to 253 (VLFGSKYSEI…HHADHLSAAQ (240 aa)) are N-terminal acylcarrier protein transacylase domain (SAT). A Ketosynthase family 3 (KS3) domain is found at 384–800 (SIPIAVTGLA…GSNAAIVLKE (417 aa)). Active-site for beta-ketoacyl synthase activity residues include Cys-549, His-684, and His-723. The segment at 910–1212 (LCFGGQTGNK…CPMDLSGPQA (303 aa)) is malonyl-CoA:ACP transacylase (MAT) domain. Catalysis depends on Ser-997, which acts as the For acyl/malonyl transferase activity. An N-terminal hotdog fold region spans residues 1279–1407 (EGLKLVQLLK…GTISLSPGAN (129 aa)). Residues 1279-1586 (EGLKLVQLLK…FTSVSIQSLR (308 aa)) enclose the PKS/mFAS DH domain. A product template (PT) domain region spans residues 1282–1585 (KLVQLLKNEG…TFTSVSIQSL (304 aa)). The active-site Proton acceptor; for dehydratase activity is the His-1312. The tract at residues 1435–1586 (SSSGLKRSTV…FTSVSIQSLR (152 aa)) is C-terminal hotdog fold. Residue Asp-1493 is the Proton donor; for dehydratase activity of the active site. Residues 1626–1703 (SSNGDDLRTV…ALVQRIFPGR (78 aa)) form the Carrier domain. Position 1663 is an O-(pantetheine 4'-phosphoryl)serine (Ser-1663). A methyltransferase (CMeT) domain region spans residues 1865–2098 (HHTSEHKLLH…GFNWVDWTDN (234 aa)). Positions 2127-2475 (SDIHEETVVY…YEFLRSHVRL (349 aa)) are thioesterase (TE) domain. Residues Ser-2250 and Asp-2412 each act as for thioesterase activity in the active site.

It carries out the reaction 3 malonyl-CoA + acetyl-CoA + 2 S-adenosyl-L-methionine = 3,5-dimethylorsellinate + 2 S-adenosyl-L-homocysteine + 3 CO2 + 4 CoA. It participates in secondary metabolite biosynthesis; terpenoid biosynthesis. Non-reducing polyketide synthase; part of the gene cluster that mediates the biosynthesis of paraherquonin, a meroterpenoid with a unique, highly congested hexacyclic molecular architecture. The first step of the pathway is the synthesis of 3,5-dimethylorsellinic acid (DMOA) by the polyketide synthase prhL. Synthesis of DMOA is followed by farnesylation by the prenyltransferase prhE, methylesterification by the methyl-transferase prhM, epoxidation of the prenyl chain by the flavin-dependent monooxygenase prhF, and cyclization of the farnesyl moiety by the terpene cyclase prhH, to yield the tetracyclic intermediate, protoaustinoid A. The short chain dehydrogenase prhI then oxidizes the C-3 alcohol group of the terpene cyclase product to transform protoaustinoid A into protoaustinoid B. The FAD-binding monooxygenase prhJ catalyzes the oxidation of protoaustinoid B into preaustinoid A which is further oxidized into preaustinoid A1 by FAD-binding monooxygenase phrK. Finally, prhA leads to berkeleydione via the berkeleyone B intermediate. PrhA is a multifunctional dioxygenase that first desaturates at C5-C6 to form berkeleyone B, followed by rearrangement of the A/B-ring to form the cycloheptadiene moiety in berkeleydione. Berkeleydione serves as the key intermediate for the biosynthesis of paraherquonin as well as many other meroterpenoids. The cytochrome P450 monooxygenases prhB, prhD, and prhN, as well as the isomerase prhC, are probably involved in the late stage of paraherquonin biosynthesis, after the production of berkeleydione. Especially prhC might be a multifunctional enzyme that catalyzes the D-ring expansion via intramolecular methoxy rearrangement, as well as the hydrolysis of the expanded D-ring. The protein is Non-reducing polyketide synthase prhL of Penicillium brasilianum.